A 201-amino-acid polypeptide reads, in one-letter code: Small ribosomal subunit protein uS10m (201 aa).

It belongs to the universal ribosomal protein uS10 family. As to quaternary structure, component of the mitochondrial ribosome small subunit (28S) which comprises a 12S rRNA and about 30 distinct proteins.

It localises to the mitochondrion. The polypeptide is Small ribosomal subunit protein uS10m (MRPS10) (Pongo abelii (Sumatran orangutan)).